The following is a 108-amino-acid chain: Probable chaperone-like protein YdbL (108 aa).

Residues M1–A21 form the signal peptide.

The protein resides in the periplasm. Its function is as follows. Probably acts as a chaperone-like protein that contributes to, but is not required for, the formation of the YdbH-YnbE intermembrane bridge. Affects the function and the structure of the YdbH-YnbE complex. Overexpression of ydbL causes a negative effect on YdbH-YnbE function. This is Probable chaperone-like protein YdbL (ydbL) from Escherichia coli (strain K12).